The following is a 136-amino-acid chain: Small ribosomal subunit protein eS8 (136 aa).

This sequence belongs to the eukaryotic ribosomal protein eS8 family. Part of the 30S ribosomal subunit.

The polypeptide is Small ribosomal subunit protein eS8 (rps8e) (Aeropyrum pernix (strain ATCC 700893 / DSM 11879 / JCM 9820 / NBRC 100138 / K1)).